A 280-amino-acid polypeptide reads, in one-letter code: 2-dehydro-3-deoxyphosphooctonate aldolase (280 aa).

This sequence belongs to the KdsA family.

It is found in the cytoplasm. The catalysed reaction is D-arabinose 5-phosphate + phosphoenolpyruvate + H2O = 3-deoxy-alpha-D-manno-2-octulosonate-8-phosphate + phosphate. It functions in the pathway carbohydrate biosynthesis; 3-deoxy-D-manno-octulosonate biosynthesis; 3-deoxy-D-manno-octulosonate from D-ribulose 5-phosphate: step 2/3. The protein operates within bacterial outer membrane biogenesis; lipopolysaccharide biosynthesis. This chain is 2-dehydro-3-deoxyphosphooctonate aldolase, found in Coxiella burnetii (strain CbuK_Q154) (Coxiella burnetii (strain Q154)).